We begin with the raw amino-acid sequence, 410 residues long: Peptidase T (410 aa).

His-79 provides a ligand contact to Zn(2+). The active site involves Asp-81. Asp-142 provides a ligand contact to Zn(2+). Glu-176 serves as the catalytic Proton acceptor. Zn(2+) contacts are provided by Glu-177, Asp-199, and His-381.

This sequence belongs to the peptidase M20B family. It depends on Zn(2+) as a cofactor.

It is found in the cytoplasm. The enzyme catalyses Release of the N-terminal residue from a tripeptide.. Its function is as follows. Cleaves the N-terminal amino acid of tripeptides. The chain is Peptidase T from Bacillus cereus (strain G9842).